The primary structure comprises 150 residues: Toxin coregulated pilus biosynthesis protein Q (150 aa).

Involved in TCP pilus biogenesis. This Vibrio cholerae serotype O1 (strain ATCC 39315 / El Tor Inaba N16961) protein is Toxin coregulated pilus biosynthesis protein Q (tcpQ).